The primary structure comprises 550 residues: Methyl-accepting chemotaxis protein PcaY (550 aa).

Topologically, residues 1-19 are cytoplasmic; it reads MVPTRSTARMLANLKIRTG. A helical transmembrane segment spans residues 20-40; sequence MFWVLSLFSLTLLFSTASAWW. At 41-198 the chain is on the periplasmic side; sequence AALGSDQQIT…ESDRRLARAQ (158 aa). A ligand-binding domain region spans residues 44 to 196; sequence GSDQQITELD…MLESDRRLAR (153 aa). Residues Arg-71 and Asn-75 each coordinate benzoate. The salicylate site is built by Arg-71, Asn-75, and Tyr-135. 3,4-dihydroxybenzoate is bound at residue 71 to 78; sequence RSSANVSS. L-quinate-binding positions include 71–78, Tyr-135, Gln-142, and Asn-158; that span reads RSSANVSS. A 3,4-dihydroxybenzoate-binding site is contributed by Gln-169. A helical transmembrane segment spans residues 199–219; that stretch reads LLSLCLLGVTVVLAVLCWAFI. The Cytoplasmic portion of the chain corresponds to 220–550; that stretch reads AQRVLHPLRE…MTALVGRFKV (331 aa). The HAMP domain occupies 221 to 273; the sequence is QRVLHPLREAGGHFRRIASGDLSVPVQGQGNNEIGQLFHELQRMQQSQRDTLG. The Methyl-accepting transducer domain maps to 278–514; it reads CARQLDAAAT…EVDRNLLNIR (237 aa).

The protein belongs to the methyl-accepting chemotaxis (MCP) protein family. Ligand free PcaY_PP-ligand-binding domain (LBD) is present in a monomer-dimer equilibrium. Only the dimeric LBD is able to bind ligands which in turn causes dimer stabilization.

It localises to the cell inner membrane. Chemotactic-signal transducers respond to changes in the concentration of attractants and repellents in the environment, transduce a signal from the outside to the inside of the cell, and facilitate sensory adaptation through the variation of the level of methylation. PcaY recognizes a wide range of compounds containing a C6-membered ring with a carboxylate group. Binds preferentially compounds that serve as carbon sources and among them those that rapidly promote growth. Tightest binding compounds are quinate, shikimate, 3-dehydroshikimate and protocatechuate, which are at the interception of the biosynthetic shikimate and catabolic quinate pathways. The protein is Methyl-accepting chemotaxis protein PcaY of Pseudomonas putida (strain ATCC 47054 / DSM 6125 / CFBP 8728 / NCIMB 11950 / KT2440).